The chain runs to 689 residues: Glycine--tRNA ligase beta subunit (689 aa).

It belongs to the class-II aminoacyl-tRNA synthetase family. As to quaternary structure, tetramer of two alpha and two beta subunits.

It localises to the cytoplasm. The enzyme catalyses tRNA(Gly) + glycine + ATP = glycyl-tRNA(Gly) + AMP + diphosphate. The chain is Glycine--tRNA ligase beta subunit from Escherichia coli (strain K12 / MC4100 / BW2952).